The sequence spans 236 residues: UPF0177 protein YaiH (236 aa).

6 helical membrane-spanning segments follow: residues 16–36 (YFSL…ILGY), 51–71 (ATAT…GILI), 90–110 (ILFL…TFTY), 131–151 (IVFP…FEEA), 180–200 (TGAN…TLIY), and 210–230 (ILVH…LQTI).

The protein belongs to the UPF0177 family.

It localises to the cell membrane. This is UPF0177 protein YaiH (yaiH) from Lactococcus lactis subsp. lactis (strain IL1403) (Streptococcus lactis).